Reading from the N-terminus, the 444-residue chain is Trigger factor (444 aa).

The 86-residue stretch at 160–245 (DMQVTFDFEG…VKQVEKPKLP (86 aa)) folds into the PPIase FKBP-type domain.

Belongs to the FKBP-type PPIase family. Tig subfamily.

It is found in the cytoplasm. It catalyses the reaction [protein]-peptidylproline (omega=180) = [protein]-peptidylproline (omega=0). Functionally, involved in protein export. Acts as a chaperone by maintaining the newly synthesized protein in an open conformation. Functions as a peptidyl-prolyl cis-trans isomerase. This chain is Trigger factor, found in Acinetobacter baumannii (strain AB0057).